Here is a 167-residue protein sequence, read N- to C-terminus: Small ribosomal subunit protein uS5 (167 aa).

Residues 12 to 75 enclose the S5 DRBM domain; sequence LQEKLVAVNR…EKARRNIVSV (64 aa).

The protein belongs to the universal ribosomal protein uS5 family. As to quaternary structure, part of the 30S ribosomal subunit. Contacts proteins S4 and S8.

In terms of biological role, with S4 and S12 plays an important role in translational accuracy. Its function is as follows. Located at the back of the 30S subunit body where it stabilizes the conformation of the head with respect to the body. In Shewanella loihica (strain ATCC BAA-1088 / PV-4), this protein is Small ribosomal subunit protein uS5.